Consider the following 307-residue polypeptide: Auxiliary protein GraX (307 aa).

In terms of assembly, homodimer. Interacts with GraR and GraS.

Functionally, plays a role in resistance against cationic antimicrobial peptides (CAMPs). Facilitates the activation of GraS to transduce the signal to GraR. This chain is Auxiliary protein GraX (graX), found in Staphylococcus aureus (strain NCTC 8325 / PS 47).